A 267-amino-acid polypeptide reads, in one-letter code: 4-hydroxy-tetrahydrodipicolinate reductase (267 aa).

NAD(+)-binding positions include 8–13 (GAAGRM) and Asp-34. NADP(+) is bound at residue Arg-35. NAD(+) is bound by residues 98-100 (GTT) and 122-125 (AANF). Residue His-155 is the Proton donor/acceptor of the active site. (S)-2,3,4,5-tetrahydrodipicolinate is bound at residue His-156. Lys-159 functions as the Proton donor in the catalytic mechanism. Residue 165-166 (GT) participates in (S)-2,3,4,5-tetrahydrodipicolinate binding.

This sequence belongs to the DapB family.

Its subcellular location is the cytoplasm. The catalysed reaction is (S)-2,3,4,5-tetrahydrodipicolinate + NAD(+) + H2O = (2S,4S)-4-hydroxy-2,3,4,5-tetrahydrodipicolinate + NADH + H(+). It carries out the reaction (S)-2,3,4,5-tetrahydrodipicolinate + NADP(+) + H2O = (2S,4S)-4-hydroxy-2,3,4,5-tetrahydrodipicolinate + NADPH + H(+). The protein operates within amino-acid biosynthesis; L-lysine biosynthesis via DAP pathway; (S)-tetrahydrodipicolinate from L-aspartate: step 4/4. In terms of biological role, catalyzes the conversion of 4-hydroxy-tetrahydrodipicolinate (HTPA) to tetrahydrodipicolinate. The chain is 4-hydroxy-tetrahydrodipicolinate reductase from Pseudomonas entomophila (strain L48).